The primary structure comprises 456 residues: Glycerol-3-phosphate dehydrogenase [NAD(+)] At3g07690, cytosolic (456 aa).

NAD(+)-binding positions include 41–46 (GAGAWG), K189, and A228. Residue K189 coordinates substrate. The active-site Proton acceptor is the K278. 2 residues coordinate NAD(+): R340 and Q368. Residue 340–341 (RN) coordinates substrate.

This sequence belongs to the NAD-dependent glycerol-3-phosphate dehydrogenase family. As to quaternary structure, homodimer.

The protein localises to the cytoplasm. It carries out the reaction sn-glycerol 3-phosphate + NAD(+) = dihydroxyacetone phosphate + NADH + H(+). Its function is as follows. Required for glycerol-3-phosphate (G3P) accumulation during systemic acquired resistance (SAR) establishment. The polypeptide is Glycerol-3-phosphate dehydrogenase [NAD(+)] At3g07690, cytosolic (Arabidopsis thaliana (Mouse-ear cress)).